Here is a 150-residue protein sequence, read N- to C-terminus: D-aminoacyl-tRNA deacylase (150 aa).

A Gly-cisPro motif, important for rejection of L-amino acids motif is present at residues 138–139 (GP).

This sequence belongs to the DTD family. Homodimer.

The protein localises to the cytoplasm. The enzyme catalyses glycyl-tRNA(Ala) + H2O = tRNA(Ala) + glycine + H(+). It catalyses the reaction a D-aminoacyl-tRNA + H2O = a tRNA + a D-alpha-amino acid + H(+). Its function is as follows. An aminoacyl-tRNA editing enzyme that deacylates mischarged D-aminoacyl-tRNAs. Also deacylates mischarged glycyl-tRNA(Ala), protecting cells against glycine mischarging by AlaRS. Acts via tRNA-based rather than protein-based catalysis; rejects L-amino acids rather than detecting D-amino acids in the active site. By recycling D-aminoacyl-tRNA to D-amino acids and free tRNA molecules, this enzyme counteracts the toxicity associated with the formation of D-aminoacyl-tRNA entities in vivo and helps enforce protein L-homochirality. The protein is D-aminoacyl-tRNA deacylase of Akkermansia muciniphila (strain ATCC BAA-835 / DSM 22959 / JCM 33894 / BCRC 81048 / CCUG 64013 / CIP 107961 / Muc).